The primary structure comprises 150 residues: 3-hydroxyacyl-[acyl-carrier-protein] dehydratase FabZ (150 aa).

Histidine 47 is an active-site residue.

Belongs to the thioester dehydratase family. FabZ subfamily.

It localises to the cytoplasm. It catalyses the reaction a (3R)-hydroxyacyl-[ACP] = a (2E)-enoyl-[ACP] + H2O. Its function is as follows. Involved in unsaturated fatty acids biosynthesis. Catalyzes the dehydration of short chain beta-hydroxyacyl-ACPs and long chain saturated and unsaturated beta-hydroxyacyl-ACPs. The polypeptide is 3-hydroxyacyl-[acyl-carrier-protein] dehydratase FabZ (Verminephrobacter eiseniae (strain EF01-2)).